A 246-amino-acid polypeptide reads, in one-letter code: 33kDa venom protein (246 aa).

Residues 1-20 (MAGKEVIFIMALFIAVESSP) form the signal peptide. A run of 7 repeats spans residues 83 to 96 (GGAV…KRET), 97 to 110 (AESL…EKAS), 111 to 124 (AENL…QKSS), 125 to 138 (VDEK…QKGA), 139 to 152 (VEGQ…RRET), 153 to 166 (AESQ…EKAS), and 167 to 180 (AENL…QKVT). A 12 X approximate tandem repeats of [AV][DE]X[VL]SGSX[DE]QX[KR]X[ST] region spans residues 83 to 243 (GGAVSESVKQ…SGSVGNDDDI (161 aa)). The segment at 88–246 (ESVKQKRETA…VGNDDDISVQ (159 aa)) is disordered. The segment covering 112-123 (ENLSGSFDQQKS) has biased composition (polar residues). A compositionally biased stretch (basic and acidic residues) spans 175-186 (DKQKVTVEEKSE). One copy of the 8; half-length repeat lies at 181–187 (VEEKSEP). A run of 4 repeats spans residues 188 to 201 (AQGQ…KRKT), 202 to 215 (TENV…EKAS), 216 to 229 (AESL…QKSS), and 230 to 243 (VDEK…DDDI). A compositionally biased stretch (polar residues) spans 217-228 (ESLSGSFDQQKS).

In terms of tissue distribution, expressed by the venom gland.

The protein localises to the secreted. The protein is 33kDa venom protein of Chelonus sp. nr. curvimaculatus (Parasitic wasp).